Reading from the N-terminus, the 1374-residue chain is Probable ATP-dependent RNA helicase spindle-E (1374 aa).

A Helicase ATP-binding domain is found at 46–212 (LARIRENPVI…FKTPKKVGYL (167 aa)). Residue 59 to 66 (GPTGCGKT) coordinates ATP. The DEAH box signature appears at 158-161 (DEIH). Positions 265 to 447 (VCDRLIENMH…NVILKAKLLE (183 aa)) constitute a Helicase C-terminal domain. The 66-residue stretch at 866–931 (QFAVGQMVAA…RKLDGPLAYM (66 aa)) folds into the Tudor domain.

It belongs to the DEAD box helicase family. DEAH subfamily.

It localises to the cytoplasm. The catalysed reaction is ATP + H2O = ADP + phosphate + H(+). In terms of biological role, probable ATP-binding RNA helicase which plays a central role during gametogenesis by repressing transposable elements and preventing their mobilization, which is essential for the germline integrity. Acts via the piRNA metabolic process, which mediates the repression of transposable elements during meiosis by forming complexes composed of piRNAs and Piwi proteins and govern the methylation and subsequent repression of transposons. The protein is Probable ATP-dependent RNA helicase spindle-E (spn-E) of Aedes aegypti (Yellowfever mosquito).